Reading from the N-terminus, the 148-residue chain is Snaclec stejaggregin-A subunit beta-2 (148 aa).

The N-terminal stretch at 1 to 23 (MGQFIFVSFGLLVVLLSLSGAGA) is a signal peptide. An intrachain disulfide couples cysteine 27 to cysteine 38. The C-type lectin domain maps to 34–145 (YDLYCYKVFK…CSRTHYVVCK (112 aa)). 2 N-linked (GlcNAc...) asparagine glycosylation sites follow: asparagine 47 and asparagine 78. 2 disulfides stabilise this stretch: cysteine 55-cysteine 144 and cysteine 121-cysteine 136.

The protein belongs to the snaclec family. In terms of assembly, heteromultimer; disulfide-linked. As to expression, expressed by the venom gland.

The protein localises to the secreted. In terms of biological role, interferes with one step of hemostasis (modulation of platelet aggregation, or coagulation cascade, for example). The polypeptide is Snaclec stejaggregin-A subunit beta-2 (Trimeresurus stejnegeri (Chinese green tree viper)).